We begin with the raw amino-acid sequence, 429 residues long: D-amino acid dehydrogenase (429 aa).

V3–W17 serves as a coordination point for FAD.

It belongs to the DadA oxidoreductase family. Requires FAD as cofactor.

The catalysed reaction is a D-alpha-amino acid + A + H2O = a 2-oxocarboxylate + AH2 + NH4(+). The protein operates within amino-acid degradation; D-alanine degradation; NH(3) and pyruvate from D-alanine: step 1/1. Oxidative deamination of D-amino acids. This chain is D-amino acid dehydrogenase, found in Xanthomonas campestris pv. campestris (strain 8004).